The following is a 219-amino-acid chain: Transmembrane emp24 domain-containing protein 10 (219 aa).

A signal peptide spans 1–31 (MSGWSGPLARRGPGPLALLFLFLLGPSSVLA). The tract at residues 1–142 (MSGWSGPLAR…KNYEEIAKVE (142 aa)) is required for interaction with STX17. Over 32–185 (ISFHLPVNSR…RDTNESTNTR (154 aa)) the chain is Lumenal. Residues 41 to 193 (RKCLREEIHK…TRVLYFSIFS (153 aa)) enclose the GOLD domain. The interval 147–178 (LEVELRRLEDLSESIVNDFAYMKKREEEMRDT) is required for TMED10 and TMED2 cis-Golgi network localization. R171 and R176 each carry dimethylated arginine. N-linked (GlcNAc...) asparagine glycosylation is present at N179. The helical transmembrane segment at 186-206 (VLYFSIFSMFCLIGLATWQVF) threads the bilayer. The segment at 204 to 219 (QVFYLRRFFKAKKLIE) is interaction with COPG1. At 207–219 (YLRRFFKAKKLIE) the chain is on the cytoplasmic side. The segment at 207–219 (YLRRFFKAKKLIE) is interaction with ARF1 and IL1B. Residues 211-212 (FF) carry the COPII vesicle coat-binding motif. Residues 211–219 (FFKAKKLIE) carry the COPI vesicle coat-binding motif.

It belongs to the EMP24/GP25L family. As to quaternary structure, predominantly dimeric and to a lesser extent monomeric in the ER. Monomer and dimer in ERGIC and cis-Golgi network. Forms homooligomer (via GOLD domain); the assembly is promoted by direct binding with leaderless cargos and may form a protein channel that facilitates cargo entry into the ERGIC. Forms heterooligomeric complexes with other members of the p24 family such as TMED2, TMED7 and TMED9. Interacts (via GOLD domain) with TMED2 (via GOLD domain); the complex is required for export of TMED10 from the ER to the cis-Golgi network; the complex is proposed to be involved in cis-Golgi network dynamics and / or biogenesis. Associates with the COPI vesicle coat subunits (coatomer). Tetramerization of the cytoplasmic domain at the Golgi membrane in vitro; the complex is proposed to interact with COPI coatomer and induce budding of the vesicles. Interacts with COPG1; the interaction involves TMED10 homodimer. Interacts with ARF1 (GDP-bound); the interaction probably involves a TMED10 oligomer. Interacts with SEC23A, SEC24B, SEC24C and SEC24D components of the coat protein complex II/COPII, indicative of an association of TMED10 with the COPII vesicle coat. Interacts with CD59. Interacts with MPPE1/PGAP5; the complex might recruit and sort GPI-anchored proteins to the ER-exit site, or the interaction might lead to recycling of PGAP5 between the ER and the Golgi. Interacts with F2LR1/PAR2. Interacts with KDELR2/ERD2; the interaction is disrupted by KDELR2 ligand. Found in a complex composed at least of SURF4, TMED2 and TMED10. Associates with the presenilin-dependent gamma-secretase complex. Interacts with STX17; the interaction is direct. Interacts with IL-1; the interaction is direct. Interacts with RAB21 (active GTP-bound form); the interaction is indirect and regulates TMED10 abundance and localization at the Golgi.

The protein resides in the endoplasmic reticulum membrane. It localises to the endoplasmic reticulum-Golgi intermediate compartment membrane. The protein localises to the golgi apparatus membrane. It is found in the golgi apparatus. Its subcellular location is the cis-Golgi network membrane. The protein resides in the trans-Golgi network membrane. It localises to the cytoplasmic vesicle. The protein localises to the secretory vesicle membrane. It is found in the cell membrane. Its subcellular location is the melanosome. Cargo receptor involved in protein vesicular trafficking and quality control in the endoplasmic reticulum (ER) and Golgi. The p24 protein family is a group of transmembrane proteins that bind coat protein complex I/COPI and coat protein complex II/COPII involved in vesicular trafficking between the membranes. Acts at the lumenal side for incorporation of secretory cargo molecules into transport vesicles and involved in vesicle coat formation at the cytoplasmic side. Mainly functions in the early secretory pathway and cycles between the ER, ER-Golgi intermediate compartment (ERGIC) and Golgi, mediating cargo transport through COPI and COPII-coated vesicles. In COPII vesicle-mediated anterograde transport, involved in the transport of GPI-anchored proteins by acting together with TMED2 as their cargo receptor; the function specifically implies SEC24C and SEC24D of the COPII vesicle coat and lipid raft-like microdomains of the ER. Recognizes GPI anchors structural remodeled in the ER by the GPI inositol-deacylase/PGAP1 and the metallophosphoesterase MPPE1/PGAP5. In COPI vesicle-mediated retrograde transport, involved in the biogenesis of COPI vesicles and vesicle coat recruitment. Involved in trafficking of amyloid beta A4 protein and soluble APP-beta release (independent from the modulation of gamma-secretase activity). Involved in the KDELR2-mediated retrograde transport of the toxin A subunit (CTX-A-K63)together with COPI and the COOH terminus of KDELR2. On Golgi membranes, acts as a primary receptor for ARF1-GDP, a GTP-binding protein involved in COPI-vesicle formation. Increases coatomer-dependent GTPase-activating activity of ARFGAP2 which mediates the hydrolysis of ARF1-bound GTP and therefore modulates protein trafficking from the Golgi apparatus. Involved in the exocytic trafficking of G protein-coupled receptors F2LR1/PAR2 (trypsin and tryspin-like enzyme receptor), OPRM1 (opioid receptor) and P2RY4 (UTD and UDP receptor) from the Golgi to the plasma membrane, thus contributing to receptor resensitization. In addition to its cargo receptor activity, may also act as a protein channel after oligomerization, facilitating the post-translational entry of leaderless cytoplasmic cargo into the ERGIC. Involved in the translocation into ERGIC, the vesicle entry and the secretion of leaderless cargos (lacking the secretion signal sequence), including the mature form of interleukin 1/IL-1 family members, the alpha-crystallin B chain HSPB5, the carbohydrate-binding proteins galectin-1/LGALS1 and galectin-3/LGALS3, the microtubule-associated protein Tau/MAPT, and the annexin A1/ANXA1; the translocation process is dependent on cargo protein unfolding and enhanced by chaperones HSP90AB1 and HSP90B1/GRP9. Could also associates with the presenilin-dependent gamma-secretase complex in order to regulate gamma-cleavages of the amyloid beta A4 protein to yield amyloid-beta 40/Abeta40. In Oryctolagus cuniculus (Rabbit), this protein is Transmembrane emp24 domain-containing protein 10 (TMED10).